The sequence spans 382 residues: Dual-specificity RNA methyltransferase RlmN (382 aa).

Residue E94 is the Proton acceptor of the active site. The 237-residue stretch at 100 to 336 folds into the Radical SAM core domain; the sequence is EANRGTLCVS…NTITRKTRGD (237 aa). Cysteines 107 and 342 form a disulfide. [4Fe-4S] cluster-binding residues include C114, C118, and C121. Residues 168–169, S200, 222–224, and N299 contribute to the S-adenosyl-L-methionine site; these read GE and SLH. The active-site S-methylcysteine intermediate is the C342.

It belongs to the radical SAM superfamily. RlmN family. It depends on [4Fe-4S] cluster as a cofactor.

The protein localises to the cytoplasm. The enzyme catalyses adenosine(2503) in 23S rRNA + 2 reduced [2Fe-2S]-[ferredoxin] + 2 S-adenosyl-L-methionine = 2-methyladenosine(2503) in 23S rRNA + 5'-deoxyadenosine + L-methionine + 2 oxidized [2Fe-2S]-[ferredoxin] + S-adenosyl-L-homocysteine. It catalyses the reaction adenosine(37) in tRNA + 2 reduced [2Fe-2S]-[ferredoxin] + 2 S-adenosyl-L-methionine = 2-methyladenosine(37) in tRNA + 5'-deoxyadenosine + L-methionine + 2 oxidized [2Fe-2S]-[ferredoxin] + S-adenosyl-L-homocysteine. Specifically methylates position 2 of adenine 2503 in 23S rRNA and position 2 of adenine 37 in tRNAs. m2A2503 modification seems to play a crucial role in the proofreading step occurring at the peptidyl transferase center and thus would serve to optimize ribosomal fidelity. This chain is Dual-specificity RNA methyltransferase RlmN, found in Legionella pneumophila (strain Paris).